A 167-amino-acid chain; its full sequence is NADH-quinone oxidoreductase subunit I 1 (167 aa).

4Fe-4S ferredoxin-type domains are found at residues 52-82 (LQRD…IEAA) and 98-127 (KVYN…HGHG). Positions 62, 65, 68, 72, 107, 110, 113, and 117 each coordinate [4Fe-4S] cluster. A disordered region spans residues 148-167 (PVPPGAKPPSMADEVPAGAH).

It belongs to the complex I 23 kDa subunit family. NDH-1 is composed of 14 different subunits. Subunits NuoA, H, J, K, L, M, N constitute the membrane sector of the complex. [4Fe-4S] cluster is required as a cofactor.

Its subcellular location is the cell inner membrane. It catalyses the reaction a quinone + NADH + 5 H(+)(in) = a quinol + NAD(+) + 4 H(+)(out). In terms of biological role, NDH-1 shuttles electrons from NADH, via FMN and iron-sulfur (Fe-S) centers, to quinones in the respiratory chain. The immediate electron acceptor for the enzyme in this species is believed to be ubiquinone. Couples the redox reaction to proton translocation (for every two electrons transferred, four hydrogen ions are translocated across the cytoplasmic membrane), and thus conserves the redox energy in a proton gradient. In Solibacter usitatus (strain Ellin6076), this protein is NADH-quinone oxidoreductase subunit I 1.